The chain runs to 445 residues: Phosphoglucosamine mutase (445 aa).

Serine 99 serves as the catalytic Phosphoserine intermediate. Mg(2+) is bound by residues serine 99, aspartate 242, aspartate 244, and aspartate 246. Serine 99 bears the Phosphoserine mark.

The protein belongs to the phosphohexose mutase family. It depends on Mg(2+) as a cofactor. In terms of processing, activated by phosphorylation.

The catalysed reaction is alpha-D-glucosamine 1-phosphate = D-glucosamine 6-phosphate. Catalyzes the conversion of glucosamine-6-phosphate to glucosamine-1-phosphate. This is Phosphoglucosamine mutase from Helicobacter pylori (strain Shi470).